A 216-amino-acid chain; its full sequence is DNA gyrase subunit B (216 aa).

The Toprim domain maps to 140 to 216; sequence SELYLVEGDS…PDKLRYHKII (77 aa).

Belongs to the type II topoisomerase GyrB family. As to quaternary structure, heterotetramer, composed of two GyrA and two GyrB chains. In the heterotetramer, GyrA contains the active site tyrosine that forms a transient covalent intermediate with DNA, while GyrB binds cofactors and catalyzes ATP hydrolysis.

The protein resides in the cytoplasm. It catalyses the reaction ATP-dependent breakage, passage and rejoining of double-stranded DNA.. In terms of biological role, a type II topoisomerase that negatively supercoils closed circular double-stranded (ds) DNA in an ATP-dependent manner to modulate DNA topology and maintain chromosomes in an underwound state. Negative supercoiling favors strand separation, and DNA replication, transcription, recombination and repair, all of which involve strand separation. Also able to catalyze the interconversion of other topological isomers of dsDNA rings, including catenanes and knotted rings. Type II topoisomerases break and join 2 DNA strands simultaneously in an ATP-dependent manner. This is DNA gyrase subunit B (gyrB) from Acinetobacter sp. (strain ATCC 33308 / BD413 ErpE27).